The chain runs to 262 residues: Tryptophan synthase alpha chain (262 aa).

Residues E47 and D58 each act as proton acceptor in the active site.

The protein belongs to the TrpA family. Tetramer of two alpha and two beta chains.

It catalyses the reaction (1S,2R)-1-C-(indol-3-yl)glycerol 3-phosphate + L-serine = D-glyceraldehyde 3-phosphate + L-tryptophan + H2O. Its pathway is amino-acid biosynthesis; L-tryptophan biosynthesis; L-tryptophan from chorismate: step 5/5. In terms of biological role, the alpha subunit is responsible for the aldol cleavage of indoleglycerol phosphate to indole and glyceraldehyde 3-phosphate. In Chromobacterium violaceum (strain ATCC 12472 / DSM 30191 / JCM 1249 / CCUG 213 / NBRC 12614 / NCIMB 9131 / NCTC 9757 / MK), this protein is Tryptophan synthase alpha chain.